The sequence spans 306 residues: Extensin (306 aa).

Residues 1–32 (MGRIARGSKMSSLIVSLLVVLVSLNLASETTA) form the signal peptide. Positions 33-306 (KYTYSSPPPP…YTSPPPPHHY (274 aa)) are disordered. 4 stretches are compositionally biased toward pro residues: residues 38-122 (SPPP…PKHS), 133-152 (SPPP…PKHS), 183-214 (SPPP…PKHS), and 225-290 (SPPP…SPPP).

Hydroxylated on proline residues in the S-P-P-P-P repeat. Post-translationally, O-glycosylated on hydroxyprolines.

Its subcellular location is the secreted. The protein localises to the primary cell wall. Functionally, structural component in primary cell wall. This chain is Extensin, found in Daucus carota (Wild carrot).